Here is a 39-residue protein sequence, read N- to C-terminus: Photosystem II reaction center protein L (39 aa).

The chain crosses the membrane as a helical span at residues 18 to 38 (SLYLGLLLVAVLGILFSSYFF).

Belongs to the PsbL family. In terms of assembly, PSII is composed of 1 copy each of membrane proteins PsbA, PsbB, PsbC, PsbD, PsbE, PsbF, PsbH, PsbI, PsbJ, PsbK, PsbL, PsbM, PsbT, PsbX, PsbY, PsbZ, Psb30/Ycf12, peripheral proteins PsbO, CyanoQ (PsbQ), PsbU, PsbV and a large number of cofactors. It forms dimeric complexes.

It localises to the cellular thylakoid membrane. Its function is as follows. One of the components of the core complex of photosystem II (PSII). PSII is a light-driven water:plastoquinone oxidoreductase that uses light energy to abstract electrons from H(2)O, generating O(2) and a proton gradient subsequently used for ATP formation. It consists of a core antenna complex that captures photons, and an electron transfer chain that converts photonic excitation into a charge separation. This subunit is found at the monomer-monomer interface and is required for correct PSII assembly and/or dimerization. This chain is Photosystem II reaction center protein L, found in Rippkaea orientalis (strain PCC 8801 / RF-1) (Cyanothece sp. (strain PCC 8801)).